Consider the following 161-residue polypeptide: Nucleotide-binding protein Dtpsy_2240 (161 aa).

The protein belongs to the YajQ family.

In terms of biological role, nucleotide-binding protein. The protein is Nucleotide-binding protein Dtpsy_2240 of Acidovorax ebreus (strain TPSY) (Diaphorobacter sp. (strain TPSY)).